An 85-amino-acid chain; its full sequence is BmK AGP-SYPU2 (85 aa).

Positions M1–S19 are cleaved as a signal peptide. Residues K21 to N83 form the LCN-type CS-alpha/beta domain. 4 disulfide bridges follow: C31/C82, C35/C55, C41/C65, and C45/C67.

It belongs to the long (4 C-C) scorpion toxin superfamily. Sodium channel inhibitor family. Alpha subfamily. Expressed by the venom gland.

It localises to the secreted. Alpha toxins bind voltage-independently at site-3 of sodium channels (Nav) and inhibit the inactivation of the activated channels, thereby blocking neuronal transmission. Shows analgesic activity when intraperitoneally injected into mice. In Olivierus martensii (Manchurian scorpion), this protein is BmK AGP-SYPU2.